Consider the following 464-residue polypeptide: Fumarate hydratase class II (464 aa).

Substrate contacts are provided by residues 100–102 (SGT), 131–134 (HPND), 141–143 (SSN), and Thr-189. His-190 (proton donor/acceptor) is an active-site residue. Ser-320 is a catalytic residue. Substrate is bound by residues Ser-321 and 326-328 (KVN).

This sequence belongs to the class-II fumarase/aspartase family. Fumarase subfamily. Homotetramer.

It localises to the cytoplasm. It carries out the reaction (S)-malate = fumarate + H2O. Its pathway is carbohydrate metabolism; tricarboxylic acid cycle; (S)-malate from fumarate: step 1/1. Involved in the TCA cycle. Catalyzes the stereospecific interconversion of fumarate to L-malate. This is Fumarate hydratase class II from Deinococcus radiodurans (strain ATCC 13939 / DSM 20539 / JCM 16871 / CCUG 27074 / LMG 4051 / NBRC 15346 / NCIMB 9279 / VKM B-1422 / R1).